The following is a 336-amino-acid chain: Ketol-acid reductoisomerase (NADP(+)) 1 (336 aa).

The KARI N-terminal Rossmann domain maps to Ala-2–Thr-181. NADP(+) contacts are provided by residues Tyr-25–Gln-28, Arg-48, Ser-52, and Asp-82–Gln-85. His-107 is an active-site residue. Gly-133 is a binding site for NADP(+). One can recognise a KARI C-terminal knotted domain in the interval Thr-182 to Val-327. The Mg(2+) site is built by Asp-190, Glu-194, Glu-226, and Glu-230. Ser-251 contacts substrate.

Belongs to the ketol-acid reductoisomerase family. Mg(2+) is required as a cofactor.

It carries out the reaction (2R)-2,3-dihydroxy-3-methylbutanoate + NADP(+) = (2S)-2-acetolactate + NADPH + H(+). It catalyses the reaction (2R,3R)-2,3-dihydroxy-3-methylpentanoate + NADP(+) = (S)-2-ethyl-2-hydroxy-3-oxobutanoate + NADPH + H(+). The protein operates within amino-acid biosynthesis; L-isoleucine biosynthesis; L-isoleucine from 2-oxobutanoate: step 2/4. Its pathway is amino-acid biosynthesis; L-valine biosynthesis; L-valine from pyruvate: step 2/4. Its function is as follows. Involved in the biosynthesis of branched-chain amino acids (BCAA). Catalyzes an alkyl-migration followed by a ketol-acid reduction of (S)-2-acetolactate (S2AL) to yield (R)-2,3-dihydroxy-isovalerate. In the isomerase reaction, S2AL is rearranged via a Mg-dependent methyl migration to produce 3-hydroxy-3-methyl-2-ketobutyrate (HMKB). In the reductase reaction, this 2-ketoacid undergoes a metal-dependent reduction by NADPH to yield (R)-2,3-dihydroxy-isovalerate. The polypeptide is Ketol-acid reductoisomerase (NADP(+)) 1 (Bacillus cereus (strain ATCC 10987 / NRS 248)).